A 280-amino-acid polypeptide reads, in one-letter code: Fructose-1,6-bisphosphatase class 1 (280 aa).

E64, D83, L85, and D86 together coordinate Mg(2+). Substrate contacts are provided by residues 86–89 (DGSS), Y189, and K220. E226 serves as a coordination point for Mg(2+).

It belongs to the FBPase class 1 family. As to quaternary structure, homotetramer. The cofactor is Mg(2+).

Its subcellular location is the cytoplasm. The enzyme catalyses beta-D-fructose 1,6-bisphosphate + H2O = beta-D-fructose 6-phosphate + phosphate. Its pathway is carbohydrate biosynthesis; gluconeogenesis. The sequence is that of Fructose-1,6-bisphosphatase class 1 from Campylobacter jejuni subsp. jejuni serotype O:6 (strain 81116 / NCTC 11828).